Reading from the N-terminus, the 230-residue chain is uncharacterized protein (230 aa).

A helical transmembrane segment spans residues 19–39 (GIFQVLLQLVLAMMTVWDFAG). A glycan (N-linked (GlcNAc...) asparagine; by host) is linked at N41. The helical transmembrane segment at 55–75 (SFLLVLYTGLKQILEYMFSIC) threads the bilayer. Residues N86, N157, N168, and N182 are each glycosylated (N-linked (GlcNAc...) asparagine; by host). The stretch at 172–196 (TNLHKYQNDENDTEEDSEDIEKNSD) forms a coiled coil. The interval 178-205 (QNDENDTEEDSEDIEKNSDPKENSDIDS) is disordered. Acidic residues predominate over residues 180–190 (DENDTEEDSED). Residues 191 to 201 (IEKNSDPKENS) show a composition bias toward basic and acidic residues.

The protein resides in the membrane. This is an uncharacterized protein from Acanthamoeba polyphaga mimivirus (APMV).